The following is a 77-amino-acid chain: Coiled-coil-helix-coiled-coil-helix domain-containing protein C550.01c (77 aa).

One can recognise a CHCH domain in the interval 24–65; that stretch reads KGGCVEEHLRLNDCYWDTHDWRKCTEQMEEFRKCWEKRHGPL. 2 short sequence motifs (cx9C motif) span residues 27–37 and 47–57; these read CVEEHLRLNDC and CTEQMEEFRKC. Intrachain disulfides connect Cys27–Cys57 and Cys37–Cys47.

The protein resides in the cytoplasm. Its subcellular location is the nucleus. This Schizosaccharomyces pombe (strain 972 / ATCC 24843) (Fission yeast) protein is Coiled-coil-helix-coiled-coil-helix domain-containing protein C550.01c.